The chain runs to 295 residues: Fatty acyl-CoA reductase (295 aa).

21–28 (TGASSGIG) provides a ligand contact to NADP(+). Ser153 contributes to the substrate binding site. Catalysis depends on Tyr166, which acts as the Proton acceptor.

Belongs to the short-chain dehydrogenases/reductases (SDR) family.

The catalysed reaction is hexadecanal + NADP(+) + CoA = hexadecanoyl-CoA + NADPH + H(+). Its function is as follows. Catalyzes the NADPH-dependent reduction of long chain acyl-CoA (with chain lengths of 14 to 22 carbons) to the corresponding aldehyde. The sequence is that of Fatty acyl-CoA reductase (acr1) from Acinetobacter baylyi (strain ATCC 33305 / BD413 / ADP1).